The following is a 728-amino-acid chain: 1,4-alpha-glucan branching enzyme GlgB (728 aa).

The active-site Nucleophile is Asp405. Catalysis depends on Glu458, which acts as the Proton donor.

This sequence belongs to the glycosyl hydrolase 13 family. GlgB subfamily. In terms of assembly, monomer.

It catalyses the reaction Transfers a segment of a (1-&gt;4)-alpha-D-glucan chain to a primary hydroxy group in a similar glucan chain.. Its pathway is glycan biosynthesis; glycogen biosynthesis. Functionally, catalyzes the formation of the alpha-1,6-glucosidic linkages in glycogen by scission of a 1,4-alpha-linked oligosaccharide from growing alpha-1,4-glucan chains and the subsequent attachment of the oligosaccharide to the alpha-1,6 position. The protein is 1,4-alpha-glucan branching enzyme GlgB of Shigella boydii serotype 4 (strain Sb227).